The sequence spans 361 residues: Probable cytosolic iron-sulfur protein assembly protein 1 (361 aa).

7 WD repeats span residues alanine 10–glutamine 49, threonine 56–leucine 105, glycine 120–glutamate 160, aspartate 167–serine 206, glycine 213–histidine 265, valine 280–isoleucine 319, and histidine 327–proline 361.

It belongs to the WD repeat CIA1 family. As to quaternary structure, interacts with NAR1.

It is found in the cytoplasm. The protein localises to the nucleus. Its function is as follows. Essential component of the cytosolic iron-sulfur (Fe/S) protein assembly machinery. Required for the maturation of extramitochondrial Fe/S proteins. This Scheffersomyces stipitis (strain ATCC 58785 / CBS 6054 / NBRC 10063 / NRRL Y-11545) (Yeast) protein is Probable cytosolic iron-sulfur protein assembly protein 1.